The primary structure comprises 282 residues: MIPWNAYVRLLRLNKPIGILLLWYPTAWALWMANQGFPSIDLLMIFLLGTVFMRSAGCVINDIADRHIDRHVARTQFRPLTSGEVSLSEAFILLFILLCASLFLLLKLPINCFYFAVISVLITFLYPFCKRFFNAPQLVLGLAFSMGIPMAFIASGKNLNSDFIVLFLINFSWIIAYDTMYAMTDKADDLKIGVKSTAIYFASYDRLIIALLLIFLHSLWLVWAINKNVECFFYLLWCTAAGILTYQLKLIYARIPKNCFKAFLVSGYYGLVMWFAVGLALI.

9 helical membrane-spanning segments follow: residues 17–37, 40–60, 90–110, 113–133, 135–155, 163–183, 207–227, 231–251, and 262–282; these read IGILLLWYPTAWALWMANQGF, IDLLMIFLLGTVFMRSAGCVI, AFILLFILLCASLFLLLKLPI, FYFAVISVLITFLYPFCKRFF, APQLVLGLAFSMGIPMAFIAS, FIVLFLINFSWIIAYDTMYAM, LIIALLLIFLHSLWLVWAINK, CFFYLLWCTAAGILTYQLKLI, and AFLVSGYYGLVMWFAVGLALI.

This sequence belongs to the UbiA prenyltransferase family. Requires Mg(2+) as cofactor.

It localises to the cell inner membrane. It carries out the reaction all-trans-octaprenyl diphosphate + 4-hydroxybenzoate = 4-hydroxy-3-(all-trans-octaprenyl)benzoate + diphosphate. Its pathway is cofactor biosynthesis; ubiquinone biosynthesis. Its function is as follows. Catalyzes the prenylation of para-hydroxybenzoate (PHB) with an all-trans polyprenyl group. Mediates the second step in the final reaction sequence of ubiquinone-8 (UQ-8) biosynthesis, which is the condensation of the polyisoprenoid side chain with PHB, generating the first membrane-bound Q intermediate 3-octaprenyl-4-hydroxybenzoate. In Legionella pneumophila (strain Lens), this protein is 4-hydroxybenzoate octaprenyltransferase.